A 387-amino-acid polypeptide reads, in one-letter code: Protein arginine N-methyltransferase 1 (387 aa).

Residues 1–60 (MDQRKGSGSDANGGLAEATASRLRFEDPDEVMEENPAAAAATVGAEEEGGEGGGGEEVIG) form a disordered region. Residues 34 to 44 (ENPAAAAATVG) show a composition bias toward low complexity. An SAM-dependent MTase PRMT-type domain is found at 66–387 (ADYYFDSYSH…VSRTQHYKMR (322 aa)). The S-adenosyl-L-methionine site is built by His79, Arg88, Gly112, Glu134, and Glu163. Catalysis depends on residues Glu178 and Glu187.

This sequence belongs to the class I-like SAM-binding methyltransferase superfamily. Protein arginine N-methyltransferase family.

Its subcellular location is the nucleus. The catalysed reaction is L-arginyl-[protein] + S-adenosyl-L-methionine = N(omega)-methyl-L-arginyl-[protein] + S-adenosyl-L-homocysteine + H(+). It carries out the reaction L-arginyl-[protein] + 2 S-adenosyl-L-methionine = N(omega),N(omega)-dimethyl-L-arginyl-[protein] + 2 S-adenosyl-L-homocysteine + 2 H(+). Its function is as follows. Arginine methyltransferase that methylates (mono and asymmetric dimethylation) the guanidino nitrogens of arginyl residues present in target proteins. The polypeptide is Protein arginine N-methyltransferase 1 (PRMT1) (Oryza sativa subsp. indica (Rice)).